We begin with the raw amino-acid sequence, 320 residues long: Glutathione synthetase (320 aa).

Positions 130-315 (KIFISWFSRF…ITGILIDYIE (186 aa)) constitute an ATP-grasp domain. 156-212 (WKEKNDIILKPLDAMGGKGVFRIKKDDPNFSVIVETLTNYEKKYCMIQTYLPEVQFG) is an ATP binding site. Mg(2+)-binding residues include Glu286 and Asn288.

Belongs to the prokaryotic GSH synthase family. Requires Mg(2+) as cofactor. Mn(2+) serves as cofactor.

It catalyses the reaction gamma-L-glutamyl-L-cysteine + glycine + ATP = glutathione + ADP + phosphate + H(+). It participates in sulfur metabolism; glutathione biosynthesis; glutathione from L-cysteine and L-glutamate: step 2/2. The polypeptide is Glutathione synthetase (Buchnera aphidicola subsp. Schizaphis graminum (strain Sg)).